We begin with the raw amino-acid sequence, 113 residues long: Small ribosomal subunit protein bS6 (113 aa).

It belongs to the bacterial ribosomal protein bS6 family.

Its function is as follows. Binds together with bS18 to 16S ribosomal RNA. The polypeptide is Small ribosomal subunit protein bS6 (Vesicomyosocius okutanii subsp. Calyptogena okutanii (strain HA)).